The primary structure comprises 57 residues: VVYCNARTTCPSRTTCCRSPFGVWYCCPFLMGQCCRDGRHCCRHGYRCDSTSTLCLR.

Cystine bridges form between cysteine 4–cysteine 16 and cysteine 10–cysteine 26.

The protein belongs to the granulin family. Granulins are disulfide bridged. As to expression, ubiquitous.

It is found in the secreted. In terms of biological role, granulins have possible cytokine-like activity. They may play a role in inflammation, wound repair, and tissue remodeling. The polypeptide is Granulin-2 (Cyprinus carpio (Common carp)).